The chain runs to 494 residues: Splicing regulatory glutamine/lysine-rich protein 1 (494 aa).

Positions R69 to N145 constitute an RRM domain. 2 positions are modified to phosphoserine: S174 and S187. A disordered region spans residues I176 to V494. Residues E183 to G192 are compositionally biased toward basic and acidic residues. 2 stretches are compositionally biased toward basic residues: residues G193–S230 and S238–D262. Over residues K263–R340 the composition is skewed to basic and acidic residues. T348 is modified (phosphothreonine). The segment covering R357–S373 has biased composition (basic residues). 2 stretches are compositionally biased toward basic and acidic residues: residues R404 to D453 and K463 to A474.

This sequence belongs to the splicing factor SR family. As to quaternary structure, interacts with SREK1IP1. Homodimer. Binds SFRS1, SFRS2, SFRS3 and SFRS6. Interacts with the spliceosome. Ubiquitous. Detected in liver, brain, lung, spleen, testis and pancreas.

It is found in the nucleus. Functionally, participates in the regulation of alternative splicing by modulating the activity of other splice facors. Inhibits the splicing activity of SFRS1, SFRS2 and SFRS6. Augments the splicing activity of SFRS3. This Rattus norvegicus (Rat) protein is Splicing regulatory glutamine/lysine-rich protein 1 (Srek1).